The sequence spans 49 residues: PEFLEDPSVLTKEKLKSELVANNVTLPAGEQRKEVYVELYLQHLTALKR.

An LEM-like domain is found at 4–47 (LEDPSVLTKEKLKSELVANNVTLPAGEQRKEVYVELYLQHLTAL). Residues 32 to 36 (RKEVY) form an essential for biological activity region.

This sequence belongs to the thymopoietin family.

In terms of biological role, hormone of the spleen with pleiotropic actions on prothymocytes, mature T-cells, the nicotinic acetylcholine receptor, and pituitary corticotrophs. This is Splenin (SP) from Bos taurus (Bovine).